The primary structure comprises 933 residues: Phosphoenolpyruvate carboxylase (933 aa).

Active-site residues include H158 and K592.

Belongs to the PEPCase type 1 family. Mg(2+) serves as cofactor.

It catalyses the reaction oxaloacetate + phosphate = phosphoenolpyruvate + hydrogencarbonate. Forms oxaloacetate, a four-carbon dicarboxylic acid source for the tricarboxylic acid cycle. The sequence is that of Phosphoenolpyruvate carboxylase from Nitrosomonas europaea (strain ATCC 19718 / CIP 103999 / KCTC 2705 / NBRC 14298).